The primary structure comprises 269 residues: Energy-coupling factor transporter ATP-binding protein EcfA1 (269 aa).

The 235-residue stretch at 8–242 (IVFKNVSFQY…AEELTRIGLD (235 aa)) folds into the ABC transporter domain. 42–49 (GHNGSGKS) provides a ligand contact to ATP.

It belongs to the ABC transporter superfamily. Energy-coupling factor EcfA family. As to quaternary structure, forms a stable energy-coupling factor (ECF) transporter complex composed of 2 membrane-embedded substrate-binding proteins (S component), 2 ATP-binding proteins (A component) and 2 transmembrane proteins (T component).

It localises to the cell membrane. Its function is as follows. ATP-binding (A) component of a common energy-coupling factor (ECF) ABC-transporter complex. Unlike classic ABC transporters this ECF transporter provides the energy necessary to transport a number of different substrates. This Staphylococcus aureus (strain USA300) protein is Energy-coupling factor transporter ATP-binding protein EcfA1.